The chain runs to 806 residues: NADH:(hydroxy)cinnamate reductase subunit CrdB (806 aa).

S257 bears the FMN phosphoryl serine mark. The FAD site is built by A310, E329, N337, T338, G342, G343, and D576. R635 functions as the Proton donor in the catalytic mechanism. H742, E771, A786, and L787 together coordinate FAD.

This sequence belongs to the FAD-dependent oxidoreductase 2 family. FRD/SDH subfamily. NADH:(hydroxy)cinnamate reductase Crd is a heterodimer composed of CrdA and CrdB subunits, encoded by adjacent genes. The cofactor is FAD. Requires FMN as cofactor. In terms of processing, is flavinylated on Ser-257 by ApbE, encoded in a neighboring gene. Covalent attachment of FMN is essential for catalytic activity.

The catalysed reaction is 3-phenylpropanoate + NAD(+) = (E)-cinnamate + NADH + H(+). It catalyses the reaction 3-(3,4-dihydroxyphenyl)propanoate + NAD(+) = (E)-caffeate + NADH + H(+). The enzyme catalyses phloretate + NAD(+) = (E)-4-coumarate + NADH + H(+). It carries out the reaction dihydroferulate + NAD(+) = (E)-ferulate + NADH + H(+). Is inactivated by molecular oxygen, allowing regulation of Crd activity by medium oxygen level. Functionally, component of the NADH:(hydroxy)cinnamate reductase Crd that catalyzes the reduction of the double bond in cinnamate, p-coumarate, caffeate, and ferulate under anaerobic conditions with NADH or methyl viologen as the electron donor. Is moderately active against acrylate and practically inactive against urocanate, fumarate, methacrylate and crotonate. CrdB is the catalytic subunit that binds substrates. Is likely involved in protecting V.ruber from (hydroxy)cinnamate poisoning. The chain is NADH:(hydroxy)cinnamate reductase subunit CrdB from Vibrio ruber (strain DSM 16370 / JCM 11486 / BCRC 17186 / CECT 7878 / LMG 23124 / VR1).